The sequence spans 279 residues: Energy-coupling factor transporter ATP-binding protein EcfA1 (279 aa).

In terms of domain architecture, ABC transporter spans 6 to 240 (VEFRNVSFRY…KDALREIGLD (235 aa)). 40–47 (GHNGSGKS) contributes to the ATP binding site.

The protein belongs to the ABC transporter superfamily. Energy-coupling factor EcfA family. As to quaternary structure, forms a stable energy-coupling factor (ECF) transporter complex composed of 2 membrane-embedded substrate-binding proteins (S component), 2 ATP-binding proteins (A component) and 2 transmembrane proteins (T component).

Its subcellular location is the cell membrane. Functionally, ATP-binding (A) component of a common energy-coupling factor (ECF) ABC-transporter complex. Unlike classic ABC transporters this ECF transporter provides the energy necessary to transport a number of different substrates. This is Energy-coupling factor transporter ATP-binding protein EcfA1 from Oceanobacillus iheyensis (strain DSM 14371 / CIP 107618 / JCM 11309 / KCTC 3954 / HTE831).